The sequence spans 765 residues: Phosphoribosylformylglycinamidine synthase subunit PurL (765 aa).

Positions 1–13 (MTVSPTSAPTQAI) are enriched in polar residues. Positions 1–32 (MTVSPTSAPTQAIDTVERAATTPDEPQPFGEL) are disordered. Residue histidine 65 is part of the active site. Residues tyrosine 68 and lysine 112 each contribute to the ATP site. Position 114 (glutamate 114) interacts with Mg(2+). Substrate contacts are provided by residues 115–118 (SHNH) and arginine 137. Histidine 116 functions as the Proton acceptor in the catalytic mechanism. Residue aspartate 138 coordinates Mg(2+). A substrate-binding site is contributed by glutamine 263. Aspartate 291 is a binding site for Mg(2+). 335–337 (ESQ) serves as a coordination point for substrate. Residues asparagine 523 and glycine 560 each coordinate ATP. Asparagine 561 is a binding site for Mg(2+). Serine 563 is a substrate binding site.

The protein belongs to the FGAMS family. In terms of assembly, monomer. Part of the FGAM synthase complex composed of 1 PurL, 1 PurQ and 2 PurS subunits.

The protein localises to the cytoplasm. It catalyses the reaction N(2)-formyl-N(1)-(5-phospho-beta-D-ribosyl)glycinamide + L-glutamine + ATP + H2O = 2-formamido-N(1)-(5-O-phospho-beta-D-ribosyl)acetamidine + L-glutamate + ADP + phosphate + H(+). It participates in purine metabolism; IMP biosynthesis via de novo pathway; 5-amino-1-(5-phospho-D-ribosyl)imidazole from N(2)-formyl-N(1)-(5-phospho-D-ribosyl)glycinamide: step 1/2. Functionally, part of the phosphoribosylformylglycinamidine synthase complex involved in the purines biosynthetic pathway. Catalyzes the ATP-dependent conversion of formylglycinamide ribonucleotide (FGAR) and glutamine to yield formylglycinamidine ribonucleotide (FGAM) and glutamate. The FGAM synthase complex is composed of three subunits. PurQ produces an ammonia molecule by converting glutamine to glutamate. PurL transfers the ammonia molecule to FGAR to form FGAM in an ATP-dependent manner. PurS interacts with PurQ and PurL and is thought to assist in the transfer of the ammonia molecule from PurQ to PurL. In Mycolicibacterium paratuberculosis (strain ATCC BAA-968 / K-10) (Mycobacterium paratuberculosis), this protein is Phosphoribosylformylglycinamidine synthase subunit PurL.